The following is a 215-amino-acid chain: Urease accessory protein UreG (215 aa).

Residue 24–31 (GPVGSGKT) participates in GTP binding.

It belongs to the SIMIBI class G3E GTPase family. UreG subfamily. As to quaternary structure, homodimer. UreD, UreF and UreG form a complex that acts as a GTP-hydrolysis-dependent molecular chaperone, activating the urease apoprotein by helping to assemble the nickel containing metallocenter of UreC. The UreE protein probably delivers the nickel.

It localises to the cytoplasm. Functionally, facilitates the functional incorporation of the urease nickel metallocenter. This process requires GTP hydrolysis, probably effectuated by UreG. In Burkholderia orbicola (strain MC0-3), this protein is Urease accessory protein UreG.